Consider the following 312-residue polypeptide: Dehydrogenase/reductase SDR family member 7C (312 aa).

The N-terminal stretch at 1-18 is a signal peptide; it reads MGVMAMLMLPLLLLGISG. Residues Ser47, Leu49, Tyr192, Lys196, and Ser227 each contribute to the NAD(+) site. The active-site Proton acceptor is the Tyr192.

It belongs to the short-chain dehydrogenases/reductases (SDR) family.

The protein resides in the sarcoplasmic reticulum membrane. It catalyses the reaction all-trans-retinol + NAD(+) = all-trans-retinal + NADH + H(+). Functionally, NADH-dependent oxidoreductase which catalyzes the oxidation of all-trans-retinol to all-trans-retinal. Plays a role in the regulation of cardiac and skeletal muscle metabolic functions. Maintains Ca(2+) intracellular homeostasis by repressing Ca(2+) release from the sarcoplasmic reticulum (SR) in myotubes, possibly through local alternations in NAD/NADH or retinol/retinal. Also plays a role in Ca(2+) homeostasis by controlling Ca(2+) overload in the cytosol and the SR in myotubes. Involved in glucose uptake into skeletal muscles and muscle performance by activating PI3K and mTORC2-mediated AKT1 phosphorylation signaling pathways, possibly through the action of its downstream catalytic product all-trans-retinoic acid. This Homo sapiens (Human) protein is Dehydrogenase/reductase SDR family member 7C.